Reading from the N-terminus, the 443-residue chain is Frizzled/smoothened-like sans CRD protein E (443 aa).

The first 23 residues, 1–23 (MISHIKKFINLYTIVFLLYILYS), serve as a signal peptide directing secretion. The Extracellular portion of the chain corresponds to 24–83 (NENFFVKGQKLPPGFCPSPLIYRNTTDRQSDIDIGFQFLGETNCVQPCPSLILTENEWNK). N-linked (GlcNAc...) asparagine glycosylation occurs at N47. A helical transmembrane segment spans residues 84–104 (VFNMSLVAGTISMFALIFLII). At 105-120 (TYSPLVNNIKDYTRHT) the chain is on the cytoplasmic side. Residues 121–141 (VGILFLFSGILIAMTTDGRQL) traverse the membrane as a helical segment. Residues 142-166 (WDIDLGFKKYCPEPGRFARQSDSKC) lie on the Extracellular side of the membrane. The chain crosses the membrane as a helical span at residues 167–187 (LVTAIFFQFGCVTALLWWAAI). Residues 188–203 (SVDLWITIKKIKISKK) lie on the Cytoplasmic side of the membrane. The chain crosses the membrane as a helical span at residues 204-224 (LFIIYTIAVNIVTIVLTFGPV). The Extracellular portion of the chain corresponds to 225–248 (GSKQYGYIDAAIGCWLMDLKYQVG). Residues 249 to 269 (YFWAPVGFCLCVGCVSIVLIL) traverse the membrane as a helical segment. At 270 to 289 (KEIYNVSDAVKKKLLAKHLK) the chain is on the cytoplasmic side. The chain crosses the membrane as a helical span at residues 290-310 (PLMLIILMLTEFIYMFIFYSY). Residues 311 to 350 (TTSKKNHYHDIIEEYVVCLFVHAANPSVCKIGSTISPSAH) lie on the Extracellular side of the membrane. A helical membrane pass occupies residues 351–371 (FFFHLCIRLMGLEVLIFYGFT). The Cytoplasmic portion of the chain corresponds to 372–443 (RQTRKIWMRS…SGIDDSKHDP (72 aa)). Low complexity-rich tracts occupy residues 397-410 (SSSNDSKSSNNKTS) and 419-432 (ESSEQSNEPEQSIE). Residues 397-443 (SSSNDSKSSNNKTSGRVTGGFGESSEQSNEPEQSIELSGIDDSKHDP) form a disordered region.

This sequence belongs to the G-protein coupled receptor Fz/Smo family.

The protein localises to the membrane. The protein is Frizzled/smoothened-like sans CRD protein E (fscE) of Dictyostelium discoideum (Social amoeba).